A 319-amino-acid polypeptide reads, in one-letter code: Replication factor C small subunit (319 aa).

G45–T52 is a binding site for ATP.

Belongs to the activator 1 small subunits family. RfcS subfamily. Heteropentamer composed of four small subunits (RfcS) and one large subunit (RfcL). Both subunits interact with PCNA.

In terms of biological role, part of the RFC clamp loader complex which loads the PCNA sliding clamp onto DNA. The complex possesses DNA-dependent ATPase activity which is further stimulated by PCNA. This is Replication factor C small subunit (rfcS) from Archaeoglobus fulgidus (strain ATCC 49558 / DSM 4304 / JCM 9628 / NBRC 100126 / VC-16).